Reading from the N-terminus, the 440-residue chain is Replication factor C large subunit (440 aa).

48-55 (GPPGVGKT) contacts ATP.

This sequence belongs to the activator 1 small subunits family. RfcL subfamily. In terms of assembly, heteromultimer composed of small subunits (RfcS) and large subunits (RfcL).

Part of the RFC clamp loader complex which loads the PCNA sliding clamp onto DNA. This chain is Replication factor C large subunit, found in Sulfurisphaera tokodaii (strain DSM 16993 / JCM 10545 / NBRC 100140 / 7) (Sulfolobus tokodaii).